A 466-amino-acid chain; its full sequence is FBD-associated F-box protein At5g22730 (466 aa).

The F-box domain occupies 27–80; sequence EDLISKLPDSLITQILLYLPIKDIVRTSSLSSRWKSLWLLIPRLDLDSEEFQDY. One can recognise an FBD domain in the interval 385–436; it reads DEPIIFSSVPRCLVSSLESVEIKKFNGRPAKMEVARYFLENSGVLQKLVLHL.

This chain is FBD-associated F-box protein At5g22730, found in Arabidopsis thaliana (Mouse-ear cress).